A 384-amino-acid chain; its full sequence is Putative glutamate--cysteine ligase 2-2 (384 aa).

This sequence belongs to the glutamate--cysteine ligase type 2 family. YbdK subfamily.

The catalysed reaction is L-cysteine + L-glutamate + ATP = gamma-L-glutamyl-L-cysteine + ADP + phosphate + H(+). Functionally, ATP-dependent carboxylate-amine ligase which exhibits weak glutamate--cysteine ligase activity. The polypeptide is Putative glutamate--cysteine ligase 2-2 (Rubrobacter xylanophilus (strain DSM 9941 / JCM 11954 / NBRC 16129 / PRD-1)).